The chain runs to 455 residues: Putative O-acetyltransferase SAT14 (455 aa).

It belongs to the lysine N-acyltransferase MbtK family.

The protein operates within mycotoxin biosynthesis. In terms of biological role, putative O-acetyltransferase; part of the satratoxin SC2 cluster involved in the biosynthesis of satratoxins, trichothecene mycotoxins that are associated with human food poisonings. Satratoxins are suggested to be made by products of multiple gene clusters (SC1, SC2 and SC3) that encode 21 proteins in all, including polyketide synthases, acetyltransferases, and other enzymes expected to modify the trichothecene skeleton. SC1 encodes 10 proteins, SAT1 to SAT10. The largest are SAT8, which encodes a putative polyketide synthase (PKS) with a conventional non-reducing architecture, and SAT10, a putative protein containing four ankyrin repeats and thus may be involved in protein scaffolding. The putative short-chain reductase SAT3 may assist the PKS in some capacity. SAT6 contains a secretory lipase domain and acts probably as a trichothecene esterase. SAT5 encodes a putative acetyltransferase, and so, with SAT6, may affect endogenous protection from toxicity. The probable transcription factor SAT9 may regulate the expression of the SC1 cluster. SC2 encodes proteins SAT11 to SAT16, the largest of which encodes the putative reducing PKS SAT13. SAT11 is a cytochrome P450 monooxygenase, while SAT14 and SAT16 are probable acetyltransferases. The SC2 cluster may be regulated by the transcription factor SAT15. SC3 is a small cluster that encodes 5 proteins, SAT17 to SAT21. SAT21 is a putative MFS-type transporter which may have a role in exporting secondary metabolites. The four other proteins putatively encoded in SC3 include the taurine hydroxylase-like protein SAT17, the O-methyltransferase SAT18, the acetyltransferase SAT19, and the Cys6-type zinc finger SAT20, the latter being probably involved in regulation of SC3 expression. This Stachybotrys chartarum (strain CBS 109288 / IBT 7711) (Toxic black mold) protein is Putative O-acetyltransferase SAT14.